The following is a 218-amino-acid chain: Large ribosomal subunit protein uL3 (218 aa).

Residues 126 to 163 (HGFSRGPMTHGSKNHRQPGSIGAGTTPGRIYPGKRMSG) are disordered.

The protein belongs to the universal ribosomal protein uL3 family. Part of the 50S ribosomal subunit. Forms a cluster with proteins L14 and L19.

Functionally, one of the primary rRNA binding proteins, it binds directly near the 3'-end of the 23S rRNA, where it nucleates assembly of the 50S subunit. The chain is Large ribosomal subunit protein uL3 from Synechococcus sp. (strain CC9311).